The following is a 373-amino-acid chain: Anhydro-N-acetylmuramic acid kinase (373 aa).

12–19 (GTSLDGVD) is a binding site for ATP.

This sequence belongs to the anhydro-N-acetylmuramic acid kinase family.

The catalysed reaction is 1,6-anhydro-N-acetyl-beta-muramate + ATP + H2O = N-acetyl-D-muramate 6-phosphate + ADP + H(+). It functions in the pathway amino-sugar metabolism; 1,6-anhydro-N-acetylmuramate degradation. It participates in cell wall biogenesis; peptidoglycan recycling. Functionally, catalyzes the specific phosphorylation of 1,6-anhydro-N-acetylmuramic acid (anhMurNAc) with the simultaneous cleavage of the 1,6-anhydro ring, generating MurNAc-6-P. Is required for the utilization of anhMurNAc either imported from the medium or derived from its own cell wall murein, and thus plays a role in cell wall recycling. In Salmonella paratyphi A (strain ATCC 9150 / SARB42), this protein is Anhydro-N-acetylmuramic acid kinase.